Here is a 666-residue protein sequence, read N- to C-terminus: MEKGQLIEFRHQGERRLAVVDRPDGKKDWVVIDQQGQSHKLKPQRVEYEIPGGPYTVDDLPSFLGEVDQYLDPSSLEVAWELLIEEGESITPADLALLLFSEQSPSQCYAAHALLAEDKLYFKQKGNHYEPRPSSQIEEIKHQMRVQAQKEQEQQGFIDRVNQALAGEKVTWEGSDRLRLEALEKFILFPEQNHRQALDILQTLGKPGRTDETQNLLIELGIWQRHENLFLRRSAYPNQFPAKVSDVAHAYLTNPPPDPDQERFDLTTLKTYTIDDESTSEIDDGLSVETLADGGHRLWIHVADPTRLLSPNDELDLEARKRSTSLYLPTGMISMFPPELATGPMSLLQGQRCVALSFGVTLDEVGAVRDFTIAPSWVKPTYRLTYEDVDEMLVLKIQGEPELPLLAEAAKKRAQWRKSQGAITIKMPEAIIKVNADEEVQIYLQETSVSRQLVAEMMILAGEVAGRFCQEHGIPVPFRGQPQPELPSDEELLSLPPGPVRECAVRRCMPRSEVGITPSRHASLGLDLYSQATSPIRRYTDLITHFQMKAYLRGEPLPFSGEQVQEILYSVMPSSKEATLVERQTNRYWSLEFLRRNINEVWQGVMLRWLREDDGLGLILLEELGLELPHRFDRPISPGDRLSLKVSNADPHRDEIRFRELLANEA.

Residues 263–553 enclose the RNB domain; sequence RFDLTTLKTY…THFQMKAYLR (291 aa).

It belongs to the RNR ribonuclease family.

This is an uncharacterized protein from Synechocystis sp. (strain ATCC 27184 / PCC 6803 / Kazusa).